We begin with the raw amino-acid sequence, 936 residues long: Aconitate hydratase A (936 aa).

A disordered region spans residues 401-449 (VTPDFDAEGPATENTSAQTAGTPASAADAKGNIPSAAAGAEGRPSNPVT). A compositionally biased stretch (polar residues) spans 412–422 (TENTSAQTAGT). Residues C472, C538, and C541 each contribute to the [4Fe-4S] cluster site.

This sequence belongs to the aconitase/IPM isomerase family. In terms of assembly, monomer. [4Fe-4S] cluster is required as a cofactor.

It catalyses the reaction citrate = D-threo-isocitrate. The enzyme catalyses (2S,3R)-3-hydroxybutane-1,2,3-tricarboxylate = 2-methyl-cis-aconitate + H2O. Its pathway is carbohydrate metabolism; tricarboxylic acid cycle; isocitrate from oxaloacetate: step 2/2. It participates in organic acid metabolism; propanoate degradation. Involved in the catabolism of short chain fatty acids (SCFA) via the tricarboxylic acid (TCA)(acetyl degradation route) and probably via the 2-methylcitrate cycle I (propionate degradation route). Catalyzes the reversible isomerization of citrate to isocitrate via cis-aconitate. Could catalyze the hydration of 2-methyl-cis-aconitate to yield (2R,3S)-2-methylisocitrate. The apo form of AcnA functions as a RNA-binding regulatory protein. The polypeptide is Aconitate hydratase A (acn) (Corynebacterium jeikeium (strain K411)).